Reading from the N-terminus, the 159-residue chain is Nanos homolog 3 (159 aa).

Residues 42–87 are disordered; the sequence is QEMQSDADSDEQAAALLESPSGPIRSRDSPEQNTSPGGGKPKSSPA. The Nanos-type zinc-finger motif lies at 91-145; it reads FCSFCKHNGETEAVYTSHYLKNRDGDVMCPYLRQYKCPLCGATGAKAHTKRFCPM. 8 residues coordinate Zn(2+): cysteine 92, cysteine 95, histidine 108, cysteine 119, cysteine 127, cysteine 130, histidine 138, and cysteine 143. Short sequence motifs (C2HC) lie at residues 92–119 and 127–143; these read CSFC…DVMC and CPLC…KRFC. An interaction with mylpfa region spans residues 92-159; the sequence is CSFCKHNGET…YCSVYAKSTW (68 aa).

It belongs to the nanos family. Interacts (via C-terminus) with myosin mylpfa/mylz2; the interaction negatively regulates mylpfa phosphorylation. As to expression, in the embryo, displays early ubiquitous expression before being restricted to primordial germ cells in a 3'-UTR-dependent manner. Expressed in early stage germ cells in larval and adult ovaries.

It is found in the cytoplasm. The protein localises to the perinuclear region. In terms of biological role, RNA-binding protein which binds to RNA with no sequence specificity. Probably represses translation of specific mRNAs. Essential for the development of primordial germ cells (PGCs) by ensuring their proper migration and survival but is not required for PGC specification. Also required to maintain oocyte production in the adult ovary. Negatively regulates phosphorylation of myosin mylpfa/mylz2. The polypeptide is Nanos homolog 3 (Danio rerio (Zebrafish)).